A 222-amino-acid polypeptide reads, in one-letter code: Putative N-acetylmannosamine-6-phosphate 2-epimerase (222 aa).

Belongs to the NanE family.

The enzyme catalyses an N-acyl-D-glucosamine 6-phosphate = an N-acyl-D-mannosamine 6-phosphate. Its pathway is amino-sugar metabolism; N-acetylneuraminate degradation; D-fructose 6-phosphate from N-acetylneuraminate: step 3/5. In terms of biological role, converts N-acetylmannosamine-6-phosphate (ManNAc-6-P) to N-acetylglucosamine-6-phosphate (GlcNAc-6-P). The polypeptide is Putative N-acetylmannosamine-6-phosphate 2-epimerase (Oceanobacillus iheyensis (strain DSM 14371 / CIP 107618 / JCM 11309 / KCTC 3954 / HTE831)).